The following is a 152-amino-acid chain: Heavy metal-associated isoprenylated plant protein 20 (152 aa).

The HMA domain occupies 27–90 (MQTVNIKVKM…RIERTGKKAE (64 aa)). Cd(2+) is bound by residues Cys38 and Cys41. At Cys149 the chain carries Cysteine methyl ester. Cys149 carries S-farnesyl cysteine lipidation. Residues 150–152 (TVM) constitute a propeptide, removed in mature form.

It belongs to the HIPP family. In terms of assembly, interacts with ZHD11/HB29. Expressed in roots, shoot apical meristem, leaves and flowers.

It localises to the membrane. Heavy-metal-binding protein. Binds cadmium. May be involved in cadmium transport and play a role in cadmium detoxification. This chain is Heavy metal-associated isoprenylated plant protein 20, found in Arabidopsis thaliana (Mouse-ear cress).